The sequence spans 174 residues: FAD synthase (174 aa).

ATP is bound by residues T34–F35, H39–H42, D119, and Y147.

It belongs to the archaeal FAD synthase family. In terms of assembly, homodimer. Requires a divalent metal cation as cofactor.

It carries out the reaction FMN + ATP + H(+) = FAD + diphosphate. It participates in cofactor biosynthesis; FAD biosynthesis; FAD from FMN: step 1/1. Catalyzes the transfer of the AMP portion of ATP to flavin mononucleotide (FMN) to produce flavin adenine dinucleotide (FAD) coenzyme. The chain is FAD synthase from Methanococcus voltae (strain ATCC BAA-1334 / A3).